The following is a 173-amino-acid chain: Crossover junction endodeoxyribonuclease RuvC (173 aa).

Residues aspartate 8, glutamate 67, and aspartate 139 contribute to the active site. Residues aspartate 8, glutamate 67, and aspartate 139 each contribute to the Mg(2+) site.

Belongs to the RuvC family. In terms of assembly, homodimer which binds Holliday junction (HJ) DNA. The HJ becomes 2-fold symmetrical on binding to RuvC with unstacked arms; it has a different conformation from HJ DNA in complex with RuvA. In the full resolvosome a probable DNA-RuvA(4)-RuvB(12)-RuvC(2) complex forms which resolves the HJ. Requires Mg(2+) as cofactor.

It localises to the cytoplasm. It carries out the reaction Endonucleolytic cleavage at a junction such as a reciprocal single-stranded crossover between two homologous DNA duplexes (Holliday junction).. Its function is as follows. The RuvA-RuvB-RuvC complex processes Holliday junction (HJ) DNA during genetic recombination and DNA repair. Endonuclease that resolves HJ intermediates. Cleaves cruciform DNA by making single-stranded nicks across the HJ at symmetrical positions within the homologous arms, yielding a 5'-phosphate and a 3'-hydroxyl group; requires a central core of homology in the junction. The consensus cleavage sequence is 5'-(A/T)TT(C/G)-3'. Cleavage occurs on the 3'-side of the TT dinucleotide at the point of strand exchange. HJ branch migration catalyzed by RuvA-RuvB allows RuvC to scan DNA until it finds its consensus sequence, where it cleaves and resolves the cruciform DNA. The protein is Crossover junction endodeoxyribonuclease RuvC of Shewanella baltica (strain OS223).